The sequence spans 439 residues: Histidinol dehydrogenase (439 aa).

Residues tyrosine 125, glutamine 187, and asparagine 210 each contribute to the NAD(+) site. Residues threonine 233, glutamine 255, and histidine 258 each contribute to the substrate site. Glutamine 255 and histidine 258 together coordinate Zn(2+). Residues glutamate 323 and histidine 324 each act as proton acceptor in the active site. Positions 324, 357, 411, and 416 each coordinate substrate. Residue aspartate 357 coordinates Zn(2+). Histidine 416 lines the Zn(2+) pocket.

This sequence belongs to the histidinol dehydrogenase family. Zn(2+) serves as cofactor.

It carries out the reaction L-histidinol + 2 NAD(+) + H2O = L-histidine + 2 NADH + 3 H(+). It functions in the pathway amino-acid biosynthesis; L-histidine biosynthesis; L-histidine from 5-phospho-alpha-D-ribose 1-diphosphate: step 9/9. Functionally, catalyzes the sequential NAD-dependent oxidations of L-histidinol to L-histidinaldehyde and then to L-histidine. The sequence is that of Histidinol dehydrogenase from Symbiobacterium thermophilum (strain DSM 24528 / JCM 14929 / IAM 14863 / T).